The following is a 174-amino-acid chain: CASP-like protein 4D2 (174 aa).

Topologically, residues 1–14 (MAPPPPSPPAVSLK) are cytoplasmic. Residues 15–35 (VLLLLLRVLTGVFLVIALIIL) form a helical membrane-spanning segment. Over 36-60 (STNSVTIVSQGSALKFHFKDVYAYR) the chain is Extracellular. A helical membrane pass occupies residues 61–81 (YMLSAAVIGLVYAVIQLFFTI). Residues 82-97 (SEFATGVKNPFNYQLD) are Cytoplasmic-facing. Residues 98 to 118 (FYGDKLISYLVATGSAAGFGV) traverse the membrane as a helical segment. At 119–150 (TKDLKDTFLALVALDSTDPVDKFFSKGYASAS) the chain is on the extracellular side. Residues 151–171 (LLLFAFICLAVLSVFSSFAMA) form a helical membrane-spanning segment. At 172–174 (KRN) the chain is on the cytoplasmic side.

Belongs to the Casparian strip membrane proteins (CASP) family. In terms of assembly, homodimer and heterodimers.

The protein resides in the cell membrane. The sequence is that of CASP-like protein 4D2 from Arabidopsis thaliana (Mouse-ear cress).